The chain runs to 309 residues: UDP-N-acetylenolpyruvoylglucosamine reductase (309 aa).

One can recognise an FAD-binding PCMH-type domain in the interval 33–198 (RVGGPAQVLF…TSARFRGTPA (166 aa)). Arginine 178 is an active-site residue. Serine 227 serves as the catalytic Proton donor. Glutamate 297 is an active-site residue.

The protein belongs to the MurB family. Requires FAD as cofactor.

The protein localises to the cytoplasm. It catalyses the reaction UDP-N-acetyl-alpha-D-muramate + NADP(+) = UDP-N-acetyl-3-O-(1-carboxyvinyl)-alpha-D-glucosamine + NADPH + H(+). It functions in the pathway cell wall biogenesis; peptidoglycan biosynthesis. Its function is as follows. Cell wall formation. The sequence is that of UDP-N-acetylenolpyruvoylglucosamine reductase from Rhodopseudomonas palustris (strain HaA2).